Reading from the N-terminus, the 3313-residue chain is PHD finger protein rhinoceros (3313 aa).

Basic residues predominate over residues 1 to 16 (MSQRGKRGNQHHHQSH). Positions 1–136 (MSQRGKRGNQ…QGASTSSSWQ (136 aa)) are disordered. Low complexity-rich tracts occupy residues 42-71 (PPNG…ATGG) and 100-134 (LGAA…TSSS). The PHD-type 1 zinc finger occupies 323 to 373 (NVICDVCRSPDSEEANEMVFCDNCNICVHQACYGITAIPSGQWLCRTCSMG). A C2HC pre-PHD-type zinc finger spans residues 375-409 (TPDCVLCPNKAGAMKSNKSGKHWAHVSCALWIPEV). The segment at 433–487 (LVCVLCRKRVGSCIQCSKHSMSKGKKENAGGASGGGSASVTSSMHKANKYATGTG) adopts a PHD-type 2; degenerate zinc-finger fold. Disordered regions lie at residues 453–526 (MSKG…ARAQ), 708–1076 (LQSG…TKAA), 1107–1842 (KEAK…PPSH), 1961–2033 (AQKE…TMGN), 2104–2136 (PVTA…RMQR), 2145–2164 (ARRS…PPAT), 2219–2252 (AAPQ…FNGG), 2353–2374 (PAYP…PAHP), 2398–2514 (VAAK…PPPM), 2563–2587 (TTRG…LHPV), 2647–2679 (ATGT…QPPA), 2827–2871 (SCGL…SSSR), 2888–2954 (LAGA…IKIR), 2978–2998 (YEMT…YSTP), 3017–3077 (DFDK…SATT), 3144–3233 (KAEK…SLPE), and 3259–3313 (YENS…CEVR). Over residues 512–526 (KNDMTSEERNQARAQ) the composition is skewed to basic and acidic residues. A compositionally biased stretch (polar residues) spans 735–749 (KKLNNGAITSRTSSP). The segment covering 760–772 (STSTSTATATTAA) has biased composition (low complexity). The span at 792 to 802 (GAATGTSTHNK) shows a compositional bias: polar residues. Low complexity-rich tracts occupy residues 803 to 861 (TQSQ…ASGI) and 894 to 912 (EAAA…ATSS). A compositionally biased stretch (basic and acidic residues) spans 919 to 934 (QQRRRQEPERERDGRG). The segment covering 942 to 955 (TVPNRTQPTKSKQS) has biased composition (polar residues). The segment covering 956–972 (TQADAGSGAGTGAAVET) has biased composition (low complexity). The segment covering 994-1003 (ESLSSDESEE) has biased composition (acidic residues). Residues 1015–1025 (AALSSGLAASG) are compositionally biased toward low complexity. Residues 1058–1072 (VESNVSDSQNQQTIR) show a composition bias toward polar residues. Composition is skewed to basic and acidic residues over residues 1159 to 1168 (AADRMREPES) and 1178 to 1205 (KLKD…KEQS). Low complexity predominate over residues 1250–1266 (EAKSTAPAAKPTAAKTS). Residues 1285–1301 (LKSSKPLQDTTFSTANE) are compositionally biased toward polar residues. Low complexity-rich tracts occupy residues 1308–1324 (AATT…GVAT), 1377–1404 (SSSS…SGSD), and 1451–1464 (PAAS…AAAT). Residues 1475–1485 (TARTRQNSTNK) are compositionally biased toward polar residues. Basic and acidic residues predominate over residues 1551-1579 (SPEKQTARRKSRADESPKKIPNLEHEINQ). Over residues 1638–1650 (PVVEPEVETEIEP) the composition is skewed to acidic residues. The span at 1667–1678 (TAPTHTQLSANA) shows a compositional bias: polar residues. Pro residues predominate over residues 1691 to 1702 (PAAPLPASPTPT). Residues 1722–1734 (SRWRSRRRRRRRS) show a composition bias toward basic residues. Residues 1744 to 1773 (HTQHLLNEMEMARELEEERKNELLANASKY) are a coiled coil. Basic and acidic residues predominate over residues 1753 to 1765 (EMARELEEERKNE). 2 stretches are compositionally biased toward polar residues: residues 1771 to 1781 (SKYSASTSSPA) and 1796 to 1805 (DSNSANSGGD). A compositionally biased stretch (low complexity) spans 1806–1819 (QQQQQQQQPLPQQL). Positions 1823-1832 (SPSSEVASTI) are enriched in polar residues. Residues 1965–1984 (QQQQQQQQQQQQQQQQQQQQ) are compositionally biased toward low complexity. Polar residues-rich tracts occupy residues 1985 to 1999 (SCLY…SVAS) and 2007 to 2018 (MTANSGSYANSL). Residues 2019-2033 (TNTPNATPTNATMGN) show a composition bias toward low complexity. Residues 2106-2118 (TAQSGAGSNSNKL) show a composition bias toward polar residues. Composition is skewed to low complexity over residues 2148–2157 (SSSPSSVSES) and 2222–2242 (QQQT…QQQQ). A compositionally biased stretch (pro residues) spans 2439-2451 (PVQPQPPTPPAPA). Over residues 2479–2488 (GSGGSGAPGR) the composition is skewed to gly residues. The span at 2658-2679 (PAVSAAPVAPAPAPAANSQPPA) shows a compositional bias: low complexity. The segment covering 2891–2900 (ASGGGAGTAS) has biased composition (gly residues). Polar residues predominate over residues 2909 to 2924 (CSSGSNNDNNGKTGAA). A compositionally biased stretch (basic and acidic residues) spans 2935-2946 (KTLESSEDDHQT). A compositionally biased stretch (basic and acidic residues) spans 3017 to 3026 (DFDKGEENNK). Over residues 3046-3065 (KRPKSSKPKKDKKEKKRQKQ) the composition is skewed to basic residues. Residues 3179 to 3198 (TSPQGLLLNSFTPHSQNANA) show a composition bias toward polar residues. Low complexity predominate over residues 3268 to 3290 (SASGTGSASSNSCNSNSNNNNNN). Positions 3291 to 3302 (GSGGGAASGGGS) are enriched in gly residues.

Belongs to the JADE family.

Its subcellular location is the nucleus. Functionally, may function as a negative regulator of the EGFR/Ras/MAPK signaling pathway during eye development. This is PHD finger protein rhinoceros (rno) from Drosophila pseudoobscura pseudoobscura (Fruit fly).